A 427-amino-acid polypeptide reads, in one-letter code: MPALVLIGAQWGDEGKGKATDLLGGAVDYVVRYQGGNNAGHTVVIGAESYALHLIPSGMLRADCVPVIGNGVVIDPGVLLAEMDGLTARGIDVSRLLISANAHLIMPHHRALDRVIERYLGKARIGTTGRGIGPTYGDKVARTGIRVQDLLDPGIFHKKLELVLREKNQVLAKVYNRRRIELDEVVEEYADYAKRLQPHIADTGLILDRALRAGKVVLLEGSQGTLLDVDHGTYPFVTSSNPTAGYAATGAGIGPTRISRVIGIIKAYTTRVGAGPFPTELDDKVGEELRRIGGEFGVTTGRARRTGWFDAVIARYAVRVNGLTDLFLTKLDVLSGFDRVPICVGYDLGGERVDEMPMTQTEFHHAKPIYTDLPGWHEDISDVRSFADLPGAAKDYIRALEEFSGAPVSAVGVGPGRDQTLVINDLV.

GTP is bound by residues 12-18 and 40-42; these read GDEGKGK and GHT. D13 functions as the Proton acceptor in the catalytic mechanism. Mg(2+) is bound by residues D13 and G40. IMP contacts are provided by residues 13–16, 38–41, T128, R142, Q223, T238, and R302; these read DEGK and NAGH. The active-site Proton donor is the H41. 298–304 lines the substrate pocket; the sequence is VTTGRAR. GTP-binding positions include R304, 330–332, and 412–414; these read KLD and GVG.

The protein belongs to the adenylosuccinate synthetase family. Homodimer. Requires Mg(2+) as cofactor.

It localises to the cytoplasm. The catalysed reaction is IMP + L-aspartate + GTP = N(6)-(1,2-dicarboxyethyl)-AMP + GDP + phosphate + 2 H(+). Its pathway is purine metabolism; AMP biosynthesis via de novo pathway; AMP from IMP: step 1/2. In terms of biological role, plays an important role in the de novo pathway of purine nucleotide biosynthesis. Catalyzes the first committed step in the biosynthesis of AMP from IMP. The sequence is that of Adenylosuccinate synthetase from Frankia casuarinae (strain DSM 45818 / CECT 9043 / HFP020203 / CcI3).